The following is a 336-amino-acid chain: Glycerol-3-phosphate dehydrogenase [NAD(P)+] (336 aa).

Positions 14, 15, 35, 36, and 109 each coordinate NADPH. 2 residues coordinate sn-glycerol 3-phosphate: Lys-109 and Gly-139. Position 143 (Ala-143) interacts with NADPH. The sn-glycerol 3-phosphate site is built by Lys-194, Asp-247, Ser-257, Arg-258, and Asn-259. The active-site Proton acceptor is Lys-194. Arg-258 lines the NADPH pocket. Glu-284 contributes to the NADPH binding site.

It belongs to the NAD-dependent glycerol-3-phosphate dehydrogenase family.

The protein resides in the cytoplasm. The catalysed reaction is sn-glycerol 3-phosphate + NAD(+) = dihydroxyacetone phosphate + NADH + H(+). The enzyme catalyses sn-glycerol 3-phosphate + NADP(+) = dihydroxyacetone phosphate + NADPH + H(+). Its pathway is membrane lipid metabolism; glycerophospholipid metabolism. Functionally, catalyzes the reduction of the glycolytic intermediate dihydroxyacetone phosphate (DHAP) to sn-glycerol 3-phosphate (G3P), the key precursor for phospholipid synthesis. The sequence is that of Glycerol-3-phosphate dehydrogenase [NAD(P)+] from Streptomyces coelicolor (strain ATCC BAA-471 / A3(2) / M145).